The following is a 240-amino-acid chain: Venom hemolysin-like protein 1 (240 aa).

Positions 1–18 (MQYKLILLVVGLFQASLA) are cleaved as a signal peptide. Residues 25–50 (ESVPHPSKDVAPPDTQDSSTQTEVTT) are disordered. Positions 39-50 (TQDSSTQTEVTT) are enriched in polar residues.

In terms of tissue distribution, expressed by the venom gland (anterior main gland) (at protein level).

The protein resides in the secreted. The chain is Venom hemolysin-like protein 1 from Platymeris rhadamanthus (Red spot assassin bug).